The primary structure comprises 236 residues: Lectin (236 aa).

Residue Asn-118 is glycosylated (N-linked (GlcNAc...) asparagine).

This sequence belongs to the leguminous lectin family. As to quaternary structure, homodimer of noncovalently associated chains.

Its function is as follows. D-mannose and D-glucose specific lectin. In Onobrychis viciifolia (Common sainfoin), this protein is Lectin.